A 468-amino-acid chain; its full sequence is Glutamate--tRNA ligase (468 aa).

A 'HIGH' region motif is present at residues 12-22 (PSPTGMMHIGT). The 'KMSKS' region signature appears at 238–242 (KLSKR). Lys-241 is a binding site for ATP.

This sequence belongs to the class-I aminoacyl-tRNA synthetase family. Glutamate--tRNA ligase type 1 subfamily. As to quaternary structure, monomer.

It is found in the cytoplasm. It carries out the reaction tRNA(Glu) + L-glutamate + ATP = L-glutamyl-tRNA(Glu) + AMP + diphosphate. In terms of biological role, catalyzes the attachment of glutamate to tRNA(Glu) in a two-step reaction: glutamate is first activated by ATP to form Glu-AMP and then transferred to the acceptor end of tRNA(Glu). In Phenylobacterium zucineum (strain HLK1), this protein is Glutamate--tRNA ligase.